A 548-amino-acid chain; its full sequence is 5-epi-aristolochene synthase 1 (548 aa).

Residues aspartate 301, aspartate 305, aspartate 444, threonine 448, and glutamate 452 each contribute to the Mg(2+) site. The DDXXD motif motif lies at 301–305; that stretch reads DDTFD.

The protein belongs to the terpene synthase family. Monomer. The cofactor is Mg(2+). In terms of tissue distribution, expressed in roots, but not in shoots.

The protein localises to the cytoplasm. It catalyses the reaction (2E,6E)-farnesyl diphosphate = (+)-5-epi-aristolochene + diphosphate. Its pathway is secondary metabolite biosynthesis; terpenoid biosynthesis. Its function is as follows. Catalyzes the cyclization of trans,trans-farnesyl diphosphate (FPP) to the bicyclic intermediate 5-epi-aristolochene, initial step in the conversion of FPP to the sesquiterpenoid antifungal phytoalexin capsidiol. Produces germacrene A as an enzyme-bound intermediate that is not released by the enzyme, but is further cyclized to produce the bicyclic 5-epi-aristolochene. The chain is 5-epi-aristolochene synthase 1 (EAS) from Nicotiana attenuata (Coyote tobacco).